The chain runs to 108 residues: Glutaredoxin-1 (108 aa).

Residues 3–106 (EEFVQQRLAN…DILSSIGVLR (104 aa)) form the Glutaredoxin domain. A disulfide bridge connects residues C23 and C26.

It belongs to the glutaredoxin family.

The protein resides in the virion. In terms of biological role, has thioltransferase and dehydroascorbate reductase activities. The chain is Glutaredoxin-1 (OPG075) from Camelpox virus (strain M-96).